A 296-amino-acid polypeptide reads, in one-letter code: 4-hydroxybenzoate octaprenyltransferase (296 aa).

8 consecutive transmembrane segments (helical) span residues 29–49, 55–75, 102–122, 146–166, 169–189, 219–239, 241–261, and 275–295; these read IGIY…ADGV, LLIF…INDF, AWIT…LTNA, YYPQ…AFTA, GELP…TVAY, LIIG…GSRF, LGLY…WEAW, and FLHN…DYAL.

Belongs to the UbiA prenyltransferase family. Mg(2+) serves as cofactor.

It localises to the cell inner membrane. It carries out the reaction all-trans-octaprenyl diphosphate + 4-hydroxybenzoate = 4-hydroxy-3-(all-trans-octaprenyl)benzoate + diphosphate. The protein operates within cofactor biosynthesis; ubiquinone biosynthesis. Catalyzes the prenylation of para-hydroxybenzoate (PHB) with an all-trans polyprenyl group. Mediates the second step in the final reaction sequence of ubiquinone-8 (UQ-8) biosynthesis, which is the condensation of the polyisoprenoid side chain with PHB, generating the first membrane-bound Q intermediate 3-octaprenyl-4-hydroxybenzoate. This is 4-hydroxybenzoate octaprenyltransferase from Pseudomonas aeruginosa (strain UCBPP-PA14).